The following is a 429-amino-acid chain: Serine hydroxymethyltransferase (429 aa).

(6S)-5,6,7,8-tetrahydrofolate is bound by residues L126 and G130 to L132. Position 235 is an N6-(pyridoxal phosphate)lysine (K235). S359–F361 serves as a coordination point for (6S)-5,6,7,8-tetrahydrofolate.

Belongs to the SHMT family. In terms of assembly, homodimer. Pyridoxal 5'-phosphate is required as a cofactor.

It is found in the cytoplasm. The enzyme catalyses (6R)-5,10-methylene-5,6,7,8-tetrahydrofolate + glycine + H2O = (6S)-5,6,7,8-tetrahydrofolate + L-serine. It participates in one-carbon metabolism; tetrahydrofolate interconversion. Its pathway is amino-acid biosynthesis; glycine biosynthesis; glycine from L-serine: step 1/1. Its function is as follows. Catalyzes the reversible interconversion of serine and glycine with tetrahydrofolate (THF) serving as the one-carbon carrier. This reaction serves as the major source of one-carbon groups required for the biosynthesis of purines, thymidylate, methionine, and other important biomolecules. Also exhibits THF-independent aldolase activity toward beta-hydroxyamino acids, producing glycine and aldehydes, via a retro-aldol mechanism. The chain is Serine hydroxymethyltransferase from Synechococcus sp. (strain CC9902).